The chain runs to 228 residues: Aspartyl protease inhibitor (228 aa).

A signal peptide spans 1–15 (MKLIELCVLCAIAFA). The segment covering 88–112 (KLKSRMSGKKEEKAAVTSTKDEDLP) has biased composition (basic and acidic residues). Positions 88–119 (KLKSRMSGKKEEKAAVTSTKDEDLPKPPQKPS) are disordered. A disulfide bond links Cys-134 and Cys-224.

The protein belongs to the protease inhibitor I33 family.

The protein localises to the secreted. Its function is as follows. Aspartyl protease inhibitor. In Trichostrongylus colubriformis (Black scour worm), this protein is Aspartyl protease inhibitor.